Reading from the N-terminus, the 92-residue chain is Small ribosomal subunit protein uS19 (92 aa).

Belongs to the universal ribosomal protein uS19 family.

Its function is as follows. Protein S19 forms a complex with S13 that binds strongly to the 16S ribosomal RNA. In Bifidobacterium animalis subsp. lactis (strain AD011), this protein is Small ribosomal subunit protein uS19.